Consider the following 1013-residue polypeptide: Ephrin type-B receptor 6 (1013 aa).

A signal peptide spans 1-31; that stretch reads MASENTAGSGSRVAGMVYSLWLLVLGPSVLA. Residues 32 to 590 are Extracellular-facing; that stretch reads LEEVLLDTTG…LPEKLSLVIG (559 aa). Residues 33-231 form the Eph LBD domain; sequence EEVLLDTTGE…FSYTCPSVLR (199 aa). Fibronectin type-III domains follow at residues 363-478 and 479-574; these read PPSA…TSHE and VPSA…TLPQ. An N-linked (GlcNAc...) asparagine glycan is attached at asparagine 472. Residues 591–611 traverse the membrane as a helical segment; sequence SILGALAFLLLAAITVLAVIF. Residues 612-1013 are Cytoplasmic-facing; that stretch reads QRKRRGTGYT…HLRQPGSVEV (402 aa). The 250-residue stretch at 662-911 folds into the Protein kinase domain; the sequence is IKIEEVIGAG…QLVAAFDKMI (250 aa). Position 668 to 676 (668 to 676) interacts with ATP; sequence IGAGSFGEV. The region spanning 940-1004 is the SAM domain; that stretch reads PCLDSPQAWL…LHNIQLLQQH (65 aa). The PDZ-binding motif lies at 1011–1013; sequence VEV.

The protein belongs to the protein kinase superfamily. Tyr protein kinase family. Ephrin receptor subfamily. As to quaternary structure, interacts with CBL and EPHB1. Interacts with FYN; this interaction takes place in a ligand-independent manner. Post-translationally, ligand-binding increases phosphorylation on tyrosine residues. Phosphorylation on tyrosine residues is mediated by transphosphorylation by the catalytically active EPHB1 in a ligand-independent manner. Tyrosine phosphorylation of the receptor may act as a switch on the functional transition from cell adhesion/attraction to de-adhesion/repulsion.

Its subcellular location is the membrane. Kinase-defective receptor for members of the ephrin-B family. Binds to ephrin-B1 and ephrin-B2. Modulates cell adhesion and migration by exerting both positive and negative effects upon stimulation with ephrin-B2. Inhibits JNK activation, T-cell receptor-induced IL-2 secretion and CD25 expression upon stimulation with ephrin-B2. This chain is Ephrin type-B receptor 6 (Ephb6), found in Rattus norvegicus (Rat).